A 141-amino-acid chain; its full sequence is Hemoglobin subunit alpha-D (141 aa).

In terms of domain architecture, Globin spans 1 to 141 (VLTAEDKKLI…VAAVLAEKYR (141 aa)). 2 residues coordinate heme b: His58 and His87.

Belongs to the globin family. As to quaternary structure, heterotetramer of two alpha-D chains and two beta chains. As to expression, red blood cells.

In terms of biological role, involved in oxygen transport from the lung to the various peripheral tissues. The sequence is that of Hemoglobin subunit alpha-D (HBAD) from Sturnus vulgaris (Starling).